A 419-amino-acid polypeptide reads, in one-letter code: GTPase Obg (419 aa).

An Obg domain is found at 1-156; sequence MFIDKVNTYL…AEVNLELRLI (156 aa). In terms of domain architecture, OBG-type G spans 157-325; sequence ADVGLLGLPN…LLKEMLRMLE (169 aa). GTP-binding positions include 163–170, 188–192, 209–212, 279–282, and 306–308; these read GLPNAGKS, FTTLA, DIPG, NKID, and SAA. Mg(2+) contacts are provided by Ser170 and Thr190. An OCT domain is found at 342–419; that stretch reads KKYIYEPEFK…IGDFEFTFEK (78 aa).

It belongs to the TRAFAC class OBG-HflX-like GTPase superfamily. OBG GTPase family. As to quaternary structure, monomer. Mg(2+) is required as a cofactor.

Its subcellular location is the cytoplasm. In terms of biological role, an essential GTPase which binds GTP, GDP and possibly (p)ppGpp with moderate affinity, with high nucleotide exchange rates and a fairly low GTP hydrolysis rate. Plays a role in control of the cell cycle, stress response, ribosome biogenesis and in those bacteria that undergo differentiation, in morphogenesis control. The polypeptide is GTPase Obg (Endomicrobium trichonymphae).